The following is a 506-amino-acid chain: Ribose import ATP-binding protein RbsA 2 (506 aa).

ABC transporter domains lie at 5 to 241 (LRLS…VGRR) and 251 to 498 (VRAA…TAGT). 37 to 44 (GENGAGKS) provides a ligand contact to ATP.

This sequence belongs to the ABC transporter superfamily. Ribose importer (TC 3.A.1.2.1) family. As to quaternary structure, the complex is composed of an ATP-binding protein (RbsA), two transmembrane proteins (RbsC) and a solute-binding protein (RbsB).

It is found in the cell inner membrane. The catalysed reaction is D-ribose(out) + ATP + H2O = D-ribose(in) + ADP + phosphate + H(+). Functionally, part of the ABC transporter complex RbsABC involved in ribose import. Responsible for energy coupling to the transport system. The polypeptide is Ribose import ATP-binding protein RbsA 2 (Burkholderia ambifaria (strain ATCC BAA-244 / DSM 16087 / CCUG 44356 / LMG 19182 / AMMD) (Burkholderia cepacia (strain AMMD))).